A 137-amino-acid chain; its full sequence is MPTINQLIRKGRKSKVSKSNAPALNFGYNSYKKVATNNPAPQKRGVATRVGTMTPKKPNSALRKYARVRLSNLIEVTAYIPGIGHNLQEHSVVLIRGGRVKDLPGVRYHVIRGALDTAGVEDRRQSRSKYGTKKPKK.

It belongs to the universal ribosomal protein uS12 family. As to quaternary structure, part of the 30S ribosomal subunit. Contacts proteins S8 and S17. May interact with IF1 in the 30S initiation complex.

In terms of biological role, with S4 and S5 plays an important role in translational accuracy. Its function is as follows. Interacts with and stabilizes bases of the 16S rRNA that are involved in tRNA selection in the A site and with the mRNA backbone. Located at the interface of the 30S and 50S subunits, it traverses the body of the 30S subunit contacting proteins on the other side and probably holding the rRNA structure together. The combined cluster of proteins S8, S12 and S17 appears to hold together the shoulder and platform of the 30S subunit. This is Small ribosomal subunit protein uS12 from Lactiplantibacillus plantarum (strain ATCC BAA-793 / NCIMB 8826 / WCFS1) (Lactobacillus plantarum).